Consider the following 235-residue polypeptide: Probable membrane-associated kinase regulator 6 (235 aa).

A disordered region spans residues 108–140; that stretch reads SAATEEESEPLDTTTSEKIDTRGLNSKPSPTSS. A compositionally biased stretch (polar residues) spans 130-140; that stretch reads GLNSKPSPTSS.

The protein resides in the cell membrane. In terms of biological role, may be involved in abscisic acid signaling by acting as a kinase regulator. The polypeptide is Probable membrane-associated kinase regulator 6 (MAKR6) (Arabidopsis thaliana (Mouse-ear cress)).